The sequence spans 362 residues: DNA polymerase IV (362 aa).

In terms of domain architecture, UmuC spans 6 to 187 (IIHVDMDAFY…LPVSSFHGVG (182 aa)). The Mg(2+) site is built by aspartate 10 and aspartate 105. The active site involves glutamate 106.

This sequence belongs to the DNA polymerase type-Y family. In terms of assembly, monomer. Requires Mg(2+) as cofactor.

The protein localises to the cytoplasm. It carries out the reaction DNA(n) + a 2'-deoxyribonucleoside 5'-triphosphate = DNA(n+1) + diphosphate. Functionally, poorly processive, error-prone DNA polymerase involved in untargeted mutagenesis. Copies undamaged DNA at stalled replication forks, which arise in vivo from mismatched or misaligned primer ends. These misaligned primers can be extended by PolIV. Exhibits no 3'-5' exonuclease (proofreading) activity. May be involved in translesional synthesis, in conjunction with the beta clamp from PolIII. The protein is DNA polymerase IV of Leptospira interrogans serogroup Icterohaemorrhagiae serovar copenhageni (strain Fiocruz L1-130).